Consider the following 2203-residue polypeptide: Genome polyprotein (2203 aa).

The N-myristoyl glycine; by host moiety is linked to residue glycine 2. At 2–1513 the chain is on the cytoplasmic side; that stretch reads GAQVSTQKTG…HVSRAFICLQ (1512 aa). The interval 567 to 583 is amphipathic alpha-helix; it reads ELQNDVRQAVEGAIGRV. Residues histidine 890 and aspartate 908 each act as for protease 2A activity in the active site. Residues cysteine 925 and cysteine 927 each contribute to the Zn(2+) site. Cysteine 979 functions as the For protease 2A activity in the catalytic mechanism. Residues cysteine 985 and histidine 987 each contribute to the Zn(2+) site. The tract at residues 1119-1191 is membrane-binding; the sequence is SNGWLKKFTE…EQSAPSQSDQ (73 aa). The interval 1119-1257 is oligomerization; the sequence is SNGWLKKFTE…SPGAGKSVAT (139 aa). The RNA-binding stretch occupies residues 1140–1144; the sequence is AVKIQ. The region spanning 1223 to 1379 is the SF3 helicase domain; the sequence is EKKMSNYIQF…SMYSQNGKIN (157 aa). Zn(2+)-binding residues include cysteine 1387, cysteine 1399, and cysteine 1404. A C4-type; degenerate zinc finger spans residues 1387–1404; the sequence is CDEECCPVNFKRCCPLVC. The segment at 1431–1438 is RNA-binding; the sequence is EYNHRHSV. The interval 1442 to 1447 is oligomerization; sequence LEALFQ. Residues 1514 to 1529 lie within the membrane without spanning it; the sequence is ALTTFVSVAGIIYIIY. Residues 1530–2203 lie on the Cytoplasmic side of the membrane; it reads KLFAGFQGAY…TLRRKWLDSF (674 aa). At tyrosine 1539 the chain carries O-(5'-phospho-RNA)-tyrosine. One can recognise a Peptidase C3 domain in the interval 1559 to 1737; the sequence is GPAFEFAVAM…FSAALLRHYF (179 aa). Active-site for protease 3C activity residues include histidine 1598, glutamate 1629, and cysteine 1705. The RdRp catalytic domain occupies 1968–2084; sequence GHLIAFDYSG…SYPWPIDASL (117 aa). Positions 1974 and 2070 each coordinate Mg(2+).

The protein belongs to the picornaviruses polyprotein family. Interacts with capsid protein VP1 and capsid protein VP3 to form heterotrimeric protomers. As to quaternary structure, interacts with capsid protein VP0, and capsid protein VP3 to form heterotrimeric protomers. Five protomers subsequently associate to form pentamers which serve as building blocks for the capsid. Interacts with capsid protein VP2, capsid protein VP3 and capsid protein VP4 following cleavage of capsid protein VP0. In terms of assembly, interacts with capsid protein VP1 and capsid protein VP3 in the mature capsid. Interacts with capsid protein VP0 and capsid protein VP1 to form heterotrimeric protomers. Five protomers subsequently associate to form pentamers which serve as building blocks for the capsid. Interacts with capsid protein VP4 in the mature capsid. Interacts with protein 2C; this interaction may be important for virion morphogenesis. As to quaternary structure, interacts with capsid protein VP1 and capsid protein VP3. In terms of assembly, homodimer. Homohexamer; forms a hexameric ring structure with 6-fold symmetry characteristic of AAA+ ATPases. Interacts (via N-terminus) with host RTN3 (via reticulon domain); this interaction is important for viral replication. Interacts with capsid protein VP3; this interaction may be important for virion morphogenesis. As to quaternary structure, interacts with protein 3CD. In terms of assembly, homodimer. Interacts with host GBF1. Interacts (via GOLD domain) with host ACBD3 (via GOLD domain); this interaction allows the formation of a viral protein 3A/ACBD3 heterotetramer with a 2:2 stoichiometry, which will stimulate the recruitment of host PI4KB in order to synthesize PI4P at the viral RNA replication sites. Interacts with RNA-directed RNA polymerase. As to quaternary structure, interacts with protein 3AB and with RNA-directed RNA polymerase. In terms of assembly, interacts with Viral protein genome-linked and with protein 3CD. The cofactor is Mg(2+). Specific enzymatic cleavages in vivo by the viral proteases yield processing intermediates and the mature proteins. In terms of processing, myristoylation is required for the formation of pentamers during virus assembly. Further assembly of 12 pentamers and a molecule of genomic RNA generates the provirion. Post-translationally, during virion maturation, immature virions are rendered infectious following cleavage of VP0 into VP4 and VP2. This maturation seems to be an autocatalytic event triggered by the presence of RNA in the capsid and it is followed by a conformational change infectious virion. Myristoylation is required during RNA encapsidation and formation of the mature virus particle. In terms of processing, VPg is uridylylated by the polymerase into VPg-pUpU. This acts as a nucleotide-peptide primer for the genomic RNA replication.

Its subcellular location is the virion. It is found in the host cytoplasm. The protein localises to the host cytoplasmic vesicle membrane. The protein resides in the host nucleus. The enzyme catalyses a ribonucleoside 5'-triphosphate + H2O = a ribonucleoside 5'-diphosphate + phosphate + H(+). It catalyses the reaction Selective cleavage of Tyr-|-Gly bond in the picornavirus polyprotein.. The catalysed reaction is RNA(n) + a ribonucleoside 5'-triphosphate = RNA(n+1) + diphosphate. It carries out the reaction Selective cleavage of Gln-|-Gly bond in the poliovirus polyprotein. In other picornavirus reactions Glu may be substituted for Gln, and Ser or Thr for Gly.. With respect to regulation, replication or transcription is subject to high level of random mutations by the nucleotide analog ribavirin. Its function is as follows. Forms an icosahedral capsid of pseudo T=3 symmetry with capsid proteins VP2 and VP3. The capsid is 300 Angstroms in diameter, composed of 60 copies of each capsid protein and enclosing the viral positive strand RNA genome. Capsid protein VP1 mainly forms the vertices of the capsid. Capsid protein VP1 interacts with host cell receptor to provide virion attachment to target host cells. This attachment induces virion internalization. Tyrosine kinases are probably involved in the entry process. After binding to its receptor, the capsid undergoes conformational changes. Capsid protein VP1 N-terminus (that contains an amphipathic alpha-helix) and capsid protein VP4 are externalized. Together, they shape a pore in the host membrane through which viral genome is translocated to host cell cytoplasm. Forms an icosahedral capsid of pseudo T=3 symmetry with capsid proteins VP2 and VP3. The capsid is 300 Angstroms in diameter, composed of 60 copies of each capsid protein and enclosing the viral positive strand RNA genome. In terms of biological role, lies on the inner surface of the capsid shell. After binding to the host receptor, the capsid undergoes conformational changes. Capsid protein VP4 is released, Capsid protein VP1 N-terminus is externalized, and together, they shape a pore in the host membrane through which the viral genome is translocated into the host cell cytoplasm. Functionally, component of immature procapsids, which is cleaved into capsid proteins VP4 and VP2 after maturation. Allows the capsid to remain inactive before the maturation step. Its function is as follows. Cysteine protease that cleaves viral polyprotein and specific host proteins. It is responsible for the autocatalytic cleavage between the P1 and P2 regions, which is the first cleavage occurring in the polyprotein. Also cleaves the host translation initiation factor EIF4G1, in order to shut down the capped cellular mRNA translation. Inhibits the host nucleus-cytoplasm protein and RNA trafficking by cleaving host members of the nuclear pores. Counteracts stress granule formation probably by antagonizing its assembly or promoting its dissassembly. Plays an essential role in the virus replication cycle by acting as a viroporin. Creates a pore in the host endoplasmic reticulum and as a consequence releases Ca2+ in the cytoplasm of infected cell. In turn, high levels of cytoplasmic calcium may trigger membrane trafficking and transport of viral ER-associated proteins to viroplasms, sites of viral genome replication. In terms of biological role, induces and associates with structural rearrangements of intracellular membranes. Displays RNA-binding, nucleotide binding and NTPase activities. May play a role in virion morphogenesis and viral RNA encapsidation by interacting with the capsid protein VP3. Functionally, localizes the viral replication complex to the surface of membranous vesicles. Together with protein 3CD binds the Cis-Active RNA Element (CRE) which is involved in RNA synthesis initiation. Acts as a cofactor to stimulate the activity of 3D polymerase, maybe through a nucleid acid chaperone activity. Its function is as follows. Localizes the viral replication complex to the surface of membranous vesicles. It inhibits host cell endoplasmic reticulum-to-Golgi apparatus transport and causes the disassembly of the Golgi complex, possibly through GBF1 interaction. This would result in depletion of MHC, trail receptors and IFN receptors at the host cell surface. Plays an essential role in viral RNA replication by recruiting ACBD3 and PI4KB at the viral replication sites, thereby allowing the formation of the rearranged membranous structures where viral replication takes place. Acts as a primer for viral RNA replication and remains covalently bound to viral genomic RNA. VPg is uridylylated prior to priming replication into VPg-pUpU. The oriI viral genomic sequence may act as a template for this. The VPg-pUpU is then used as primer on the genomic RNA poly(A) by the RNA-dependent RNA polymerase to replicate the viral genome. During genome replication, the VPg-RNA linkage is removed by the host TDP2, thereby accelerating replication. During the late stage of the replication cycle, host TDP2 is excluded from sites of viral RNA synthesis and encapsidation, allowing for the generation of progeny virions. In terms of biological role, involved in the viral replication complex and viral polypeptide maturation. It exhibits protease activity with a specificity and catalytic efficiency that is different from protease 3C. Protein 3CD lacks polymerase activity. Protein 3CD binds to the 5'UTR of the viral genome. Functionally, replicates the viral genomic RNA on the surface of intracellular membranes. May form linear arrays of subunits that propagate along a strong head-to-tail interaction called interface-I. Covalently attaches UMP to a tyrosine of VPg, which is used to prime RNA synthesis. The positive stranded RNA genome is first replicated at virus induced membranous vesicles, creating a dsRNA genomic replication form. This dsRNA is then used as template to synthesize positive stranded RNA genomes. ss(+)RNA genomes are either translated, replicated or encapsidated. Its function is as follows. Major viral protease that mediates proteolytic processing of the polyprotein. Cleaves host EIF5B, contributing to host translation shutoff. Also cleaves host PABPC1, contributing to host translation shutoff. Cleaves host NLRP1, triggers host N-glycine-mediated degradation of the autoinhibitory NLRP1 N-terminal fragment. This Echovirus 9 (strain Barty) protein is Genome polyprotein.